Here is a 706-residue protein sequence, read N- to C-terminus: Elongation factor G (706 aa).

The tr-type G domain maps to 8–297 (SYVRNIGIGA…AVVDYLPSPN (290 aa)). GTP contacts are provided by residues 17 to 24 (AHIDAGKT), 95 to 99 (DTPGH), and 149 to 152 (NKMD).

Belongs to the TRAFAC class translation factor GTPase superfamily. Classic translation factor GTPase family. EF-G/EF-2 subfamily.

It localises to the cytoplasm. Functionally, catalyzes the GTP-dependent ribosomal translocation step during translation elongation. During this step, the ribosome changes from the pre-translocational (PRE) to the post-translocational (POST) state as the newly formed A-site-bound peptidyl-tRNA and P-site-bound deacylated tRNA move to the P and E sites, respectively. Catalyzes the coordinated movement of the two tRNA molecules, the mRNA and conformational changes in the ribosome. This is Elongation factor G from Orientia tsutsugamushi (strain Boryong) (Rickettsia tsutsugamushi).